Consider the following 538-residue polypeptide: Cytochrome c-552 (538 aa).

The signal sequence occupies residues 1 to 55 (MKIYLRFVWILIIILNFLLNLFITTNGVIIVNAFKKSLIVAASFASLSLFNSATA). Residue histidine 133 coordinates heme c. Residues cysteine 161, cysteine 164, and lysine 165 each coordinate heme. Heme c-binding residues include cysteine 199, cysteine 202, histidine 203, cysteine 264, cysteine 267, and histidine 268. Ca(2+)-binding residues include glutamate 270, tyrosine 271, lysine 316, and glutamine 318. Tyrosine 271 serves as a coordination point for substrate. Histidine 319 is a binding site for substrate. Histidine 330, cysteine 337, cysteine 340, histidine 341, histidine 356, cysteine 369, cysteine 372, histidine 373, and histidine 448 together coordinate heme c.

Belongs to the cytochrome c-552 family. The cofactor is Ca(2+). It depends on heme c as a cofactor.

It localises to the periplasm. The enzyme catalyses 6 Fe(III)-[cytochrome c] + NH4(+) + 2 H2O = 6 Fe(II)-[cytochrome c] + nitrite + 8 H(+). It functions in the pathway nitrogen metabolism; nitrate reduction (assimilation). Catalyzes the reduction of nitrite to ammonia, consuming six electrons in the process. The sequence is that of Cytochrome c-552 from Haemophilus influenzae (strain ATCC 51907 / DSM 11121 / KW20 / Rd).